Reading from the N-terminus, the 181-residue chain is Caltractin ICL1a (181 aa).

A disordered region spans residues 1–29; the sequence is MARRGQQPPPQQAPPAQKNQPGKFNPAEF. A compositionally biased stretch (low complexity) spans 14–23; it reads PPAQKNQPGK. 4 consecutive EF-hand domains span residues 37–72, 73–108, 110–145, and 146–181; these read EEVL…LGFE, AKNQ…RISE, DSKA…LGET, and MDDS…KTFA. 10 residues coordinate Ca(2+): aspartate 50, aspartate 52, threonine 54, serine 56, glutamate 61, aspartate 86, aspartate 88, serine 90, glutamine 92, and glutamate 97.

Belongs to the centrin family. Monomer.

It localises to the cytoplasm. The protein resides in the cytoskeleton. Its function is as follows. Plays a fundamental role in microtubule organizing center structure and function. Component of the infraciliary lattice (ICL) and the ciliary basal bodies. This chain is Caltractin ICL1a (Icl1a), found in Paramecium tetraurelia.